The following is a 655-amino-acid chain: FYVE, RhoGEF and PH domain-containing protein 2 (655 aa).

A phosphoserine mark is found at serine 11 and serine 48. Positions 18 to 64 (VFENSRTPEAAPRGQRLEDVHHRPECRPPESPGPREKTNVGEAVGSE) are disordered. Over residues 32–56 (QRLEDVHHRPECRPPESPGPREKTN) the composition is skewed to basic and acidic residues. Positions 102-290 (PEKKIVQELL…FSAAQHSNAA (189 aa)) constitute a DH domain. A PH 1 domain is found at 319–418 (TLLREGPVLK…WMQAFQAAID (100 aa)). The segment at 458 to 518 (DKMVTMCMRC…VCLHCYAFLT (61 aa)) adopts an FYVE-type zinc-finger fold. Residues cysteine 464, cysteine 467, cysteine 481, cysteine 484, cysteine 489, cysteine 492, cysteine 510, and cysteine 513 each contribute to the Zn(2+) site. Residues 544–641 (QSLMCSFLQL…WVKAMERAAS (98 aa)) form the PH 2 domain. Serine 654 carries the phosphoserine modification.

The protein resides in the cytoplasm. Its subcellular location is the cytoskeleton. It localises to the nucleus. It is found in the early endosome. The protein localises to the early endosome membrane. The protein resides in the cell projection. Its subcellular location is the ruffle membrane. Its function is as follows. Activates CDC42, a member of the Ras-like family of Rho- and Rac proteins, by exchanging bound GDP for free GTP. Activates JNK1 via CDC42 but not RAC1. Binds to phosphatidylinositol 4,5-bisphosphate, phosphatidylinositol 3,4,5-trisphosphate, phosphatidylinositol 5-monophosphate, phosphatidylinositol 4-monophosphate and phosphatidylinositol 3-monophosphate. This chain is FYVE, RhoGEF and PH domain-containing protein 2 (FGD2), found in Homo sapiens (Human).